The primary structure comprises 414 residues: ORC1-type DNA replication protein 1 (414 aa).

ATP is bound by residues 70–74, Tyr213, and Arg225; that span reads TGKTA.

Belongs to the CDC6/cdc18 family.

In terms of biological role, involved in regulation of DNA replication. The protein is ORC1-type DNA replication protein 1 (cdc6-1) of Methanosarcina mazei (strain ATCC BAA-159 / DSM 3647 / Goe1 / Go1 / JCM 11833 / OCM 88) (Methanosarcina frisia).